The sequence spans 445 residues: RNA pseudouridine synthase 2, chloroplastic (445 aa).

A chloroplast-targeting transit peptide spans 1–44 (MATTAAASPPAIATALSALLRRQRRRSSRCVGASHARCLAADAN). The segment at 47-66 (AVAPSRRGGHGGTRLEEAVP) is disordered. In terms of domain architecture, S4 RNA-binding spans 72-147 (SRIDAWISAR…IPLDIVYEDD (76 aa)). The active site involves aspartate 235.

The protein belongs to the pseudouridine synthase RluA family.

It localises to the plastid. The protein localises to the chloroplast. It carries out the reaction a uridine in RNA = a pseudouridine in RNA. The polypeptide is RNA pseudouridine synthase 2, chloroplastic (Oryza sativa subsp. japonica (Rice)).